Consider the following 147-residue polypeptide: Molybdopterin synthase catalytic subunit 1 (147 aa).

Substrate-binding positions include 43-45 (NVR), 109-110 (HR), Lys-125, and 132-134 (KKE).

Belongs to the MoaE family. In terms of assembly, heterotetramer of 2 MoaD subunits and 2 MoaE subunits. Also stable as homodimer. The enzyme changes between these two forms during catalysis.

It catalyses the reaction 2 [molybdopterin-synthase sulfur-carrier protein]-C-terminal-Gly-aminoethanethioate + cyclic pyranopterin phosphate + H2O = molybdopterin + 2 [molybdopterin-synthase sulfur-carrier protein]-C-terminal Gly-Gly + 2 H(+). It participates in cofactor biosynthesis; molybdopterin biosynthesis. Functionally, converts molybdopterin precursor Z into molybdopterin. This requires the incorporation of two sulfur atoms into precursor Z to generate a dithiolene group. The sulfur is provided by MoaD. The chain is Molybdopterin synthase catalytic subunit 1 (moaE1) from Mycobacterium tuberculosis (strain ATCC 25618 / H37Rv).